The chain runs to 415 residues: Serine hydroxymethyltransferase (415 aa).

(6S)-5,6,7,8-tetrahydrofolate contacts are provided by residues leucine 122 and 126-128; that span reads GHL. N6-(pyridoxal phosphate)lysine is present on lysine 230.

The protein belongs to the SHMT family. As to quaternary structure, homodimer. It depends on pyridoxal 5'-phosphate as a cofactor.

It localises to the cytoplasm. It catalyses the reaction (6R)-5,10-methylene-5,6,7,8-tetrahydrofolate + glycine + H2O = (6S)-5,6,7,8-tetrahydrofolate + L-serine. It participates in one-carbon metabolism; tetrahydrofolate interconversion. It functions in the pathway amino-acid biosynthesis; glycine biosynthesis; glycine from L-serine: step 1/1. Catalyzes the reversible interconversion of serine and glycine with tetrahydrofolate (THF) serving as the one-carbon carrier. This reaction serves as the major source of one-carbon groups required for the biosynthesis of purines, thymidylate, methionine, and other important biomolecules. Also exhibits THF-independent aldolase activity toward beta-hydroxyamino acids, producing glycine and aldehydes, via a retro-aldol mechanism. The protein is Serine hydroxymethyltransferase of Cupriavidus taiwanensis (strain DSM 17343 / BCRC 17206 / CCUG 44338 / CIP 107171 / LMG 19424 / R1) (Ralstonia taiwanensis (strain LMG 19424)).